The following is a 1369-amino-acid chain: MutS protein homolog 5 (1369 aa).

Residues 138 to 190 (IYEDGTTEEGTSEDTVPTWDSSLAYSTDETTAEKEEKEEDEDDDDEGLPAKLN) are disordered. Residues 173-184 (EKEEDEDDDDEG) are compositionally biased toward acidic residues. Residue 639–646 (GPNACGKS) participates in ATP binding. 4 disordered regions span residues 880 to 915 (SMRN…SVLS), 935 to 1135 (KKKK…RSSN), 1153 to 1182 (LKSQ…HSQN), and 1248 to 1278 (NFIF…SSIS). Residues 884 to 894 (VSEEIEKERSE) show a composition bias toward basic and acidic residues. Composition is skewed to polar residues over residues 895–915 (ASTP…SVLS) and 941–950 (TGSSMESSMS). A compositionally biased stretch (acidic residues) spans 954-967 (FQEEDEGTEGEEDQ). Residues 991–1003 (QSINSRHSFSTRT) are compositionally biased toward polar residues. A compositionally biased stretch (low complexity) spans 1024–1037 (STSTSSPGPSASKS). Positions 1049 to 1065 (VKESQVLETPKQLSISS) are enriched in polar residues. Residues 1073–1084 (SSEKDVISRVSE) show a composition bias toward basic and acidic residues. Polar residues-rich tracts occupy residues 1111–1124 (KNRS…QSAR) and 1153–1167 (LKSQ…TPRS). Residues 1254 to 1263 (PEPRSSEKQR) are compositionally biased toward basic and acidic residues.

It belongs to the DNA mismatch repair MutS family. Heterooligomer of him-14 and msh-5. Interacts with the brc-1-brd-1 heterodimer. Expressed in the germline.

It is found in the chromosome. In terms of biological role, crucial component in meiotic recombination, functioning at some point after the initiation step of recombination. Plays a role in promoting the crossover outcome of meiotic recombination events. Required for formation of normal meiotic crossover, and crossover and chiasmata generated by artificially made DNA breaks. Together with him-14 and zhp-3 plays a role in the activation of DNA damage-dependent apoptosis at the DNA damage checkpoint in pachytene cells. The chain is MutS protein homolog 5 from Caenorhabditis elegans.